Here is a 158-residue protein sequence, read N- to C-terminus: Transcription elongation factor GreA (158 aa).

Residues 47 to 74 (AEYHAAKEEQSHNEGRIAELEDKLARAD) are a coiled coil.

The protein belongs to the GreA/GreB family.

Its function is as follows. Necessary for efficient RNA polymerase transcription elongation past template-encoded arresting sites. The arresting sites in DNA have the property of trapping a certain fraction of elongating RNA polymerases that pass through, resulting in locked ternary complexes. Cleavage of the nascent transcript by cleavage factors such as GreA or GreB allows the resumption of elongation from the new 3'terminus. GreA releases sequences of 2 to 3 nucleotides. This chain is Transcription elongation factor GreA, found in Nitrobacter winogradskyi (strain ATCC 25391 / DSM 10237 / CIP 104748 / NCIMB 11846 / Nb-255).